The chain runs to 517 residues: MPFNGEKQYVNEDQQSDSESSRFSESTASLSDYGCSRQSFTSDSSSKSSSPASTSPPRGIMFDDVMAAAKNLSDMTLAHEIAVNENFQLRPNALPENSLAGQVKRVVHQAFWDVLEADLSAEPPQYEYAIKLFEEIREILLSFLTPGGNRLHSQICEVLDIDLIRQQAEHSAVDIQGLANYVISTMGKICAPVRDEDIRELKATTNIVEMLRQIFRVLDLMRMDMTNFVIRNIRPHIQHHLVEYERNKFQEVLEETPNALSQTTEWLKESIDKELFSETDVAPGAEHSSTPSLSPLTVLNNCYLKLLQWDYQKNVLPETLMTDGPRLQELTEKLNQLKMIACVSLITNNMVGAVTEGLPELANRLKRISAVLLEGMSKQTFNLKEALNSIGVQTCAEVNKALKERGSPTLNAEVQANLVGQFTSLEEKDNPVCALMDKRIQLYMKSLLCLPSTQKSRPPVPGGLDVIQQELEVLGCQYANIVNLNKQVYGPFYANIFRKLLFRDEAMGKIDASLPTN.

Positions 1–59 are disordered; sequence MPFNGEKQYVNEDQQSDSESSRFSESTASLSDYGCSRQSFTSDSSSKSSSPASTSPPRG. A Phosphoserine modification is found at Ser-16. Residues 17–55 show a composition bias toward low complexity; it reads DSESSRFSESTASLSDYGCSRQSFTSDSSSKSSSPASTS.

It belongs to the TCP11 family. In terms of assembly, interacts with FMNL2; this interaction promotes muscle-derived satellite cell (MDSC) migration and differentiation.

The protein localises to the cytoplasm. Its subcellular location is the cytoskeleton. Its function is as follows. Promotes the migration of muscle-derived satellite cells (MDSCs) during differentiation throught interaction with FMNL2 and therefore may participate in microfilament assembly. The polypeptide is T-complex protein 11-like protein 2 (Rattus norvegicus (Rat)).